A 230-amino-acid polypeptide reads, in one-letter code: UPF0173 metal-dependent hydrolase RSKD131_0588 (230 aa).

This sequence belongs to the UPF0173 family.

The chain is UPF0173 metal-dependent hydrolase RSKD131_0588 from Cereibacter sphaeroides (strain KD131 / KCTC 12085) (Rhodobacter sphaeroides).